A 207-amino-acid polypeptide reads, in one-letter code: MARCKS-related protein 1-B (207 aa).

Low complexity-rich tracts occupy residues 1–25 (MGSQASKGGVAVEGKAAAADPAAVK) and 63–77 (AGAGDAIEPAPAAEG). Residues 1–207 (MGSQASKGGV…STPAPSEQKE (207 aa)) are disordered. Gly-2 is lipidated: N-myristoyl glycine. The span at 78–90 (EAAKPEGEATKET) shows a compositional bias: basic and acidic residues. Residues 93–116 (KKKKKFSLKNSFKFKGISLKKSKK) are effector domain involved in lipid-binding. The span at 100–109 (LKNSFKFKGI) shows a compositional bias: low complexity. Composition is skewed to basic and acidic residues over residues 131–154 (TEEKPEENGAATEEKKEEEAKAEE) and 163–182 (PKAEEPAAKAEEPAAAKEEA). Over residues 195 to 207 (ETNSTPAPSEQKE) the composition is skewed to polar residues.

This sequence belongs to the MARCKS family. As to expression, strongly expressed in brain and eye. Also detected at lower levels in muscle.

Its subcellular location is the cytoplasm. The protein localises to the cytoskeleton. It localises to the cell membrane. Its function is as follows. Involved in the control of cell movement by regulating actin cytoskeleton homeostasis and filopodium and lamellipodium formation. The chain is MARCKS-related protein 1-B from Danio rerio (Zebrafish).